The sequence spans 278 residues: 2-dehydro-3-deoxyphosphooctonate aldolase (278 aa).

Belongs to the KdsA family.

It localises to the cytoplasm. It catalyses the reaction D-arabinose 5-phosphate + phosphoenolpyruvate + H2O = 3-deoxy-alpha-D-manno-2-octulosonate-8-phosphate + phosphate. It participates in carbohydrate biosynthesis; 3-deoxy-D-manno-octulosonate biosynthesis; 3-deoxy-D-manno-octulosonate from D-ribulose 5-phosphate: step 2/3. Its pathway is bacterial outer membrane biogenesis; lipopolysaccharide biosynthesis. The protein is 2-dehydro-3-deoxyphosphooctonate aldolase of Dechloromonas aromatica (strain RCB).